We begin with the raw amino-acid sequence, 154 residues long: MSKKFIITWDAMQSYCRELAEKQMPAEQWKGIWAVSRGGLVPGAILARELGIRHVDTICISSYDHDHQRDMTVVKAPEGDGEGFLIVEDLVDSGDTARKLREMYPKAKLIAVCAKPAGVELLDDYVVDIAQDTWIEQPWDMSIQFVEPVNRKQK.

Residues 37-38 (RG), Arg-69, and 88-96 (EDLVDSGDT) contribute to the 5-phospho-alpha-D-ribose 1-diphosphate site. A GMP-binding site is contributed by Arg-69. Residue Asp-89 participates in Mg(2+) binding. Asp-92 and Ile-135 together coordinate guanine. Xanthine-binding residues include Asp-92 and Ile-135. GMP is bound by residues 92-96 (DSGDT) and 134-135 (WI).

This sequence belongs to the purine/pyrimidine phosphoribosyltransferase family. XGPT subfamily. As to quaternary structure, homotetramer. Mg(2+) serves as cofactor.

The protein resides in the cell inner membrane. The catalysed reaction is GMP + diphosphate = guanine + 5-phospho-alpha-D-ribose 1-diphosphate. It carries out the reaction XMP + diphosphate = xanthine + 5-phospho-alpha-D-ribose 1-diphosphate. It catalyses the reaction IMP + diphosphate = hypoxanthine + 5-phospho-alpha-D-ribose 1-diphosphate. The protein operates within purine metabolism; GMP biosynthesis via salvage pathway; GMP from guanine: step 1/1. It functions in the pathway purine metabolism; XMP biosynthesis via salvage pathway; XMP from xanthine: step 1/1. Its function is as follows. Purine salvage pathway enzyme that catalyzes the transfer of the ribosyl-5-phosphate group from 5-phospho-alpha-D-ribose 1-diphosphate (PRPP) to the N9 position of the 6-oxopurines guanine and xanthine to form the corresponding ribonucleotides GMP (guanosine 5'-monophosphate) and XMP (xanthosine 5'-monophosphate), with the release of PPi. To a lesser extent, also acts on hypoxanthine. This is Xanthine-guanine phosphoribosyltransferase from Vibrio campbellii (strain ATCC BAA-1116).